The following is a 228-amino-acid chain: 2,3-bisphosphoglycerate-dependent phosphoglycerate mutase (228 aa).

Substrate-binding positions include 8-15 (RHGQSEWN), 21-22 (TG), arginine 60, 87-90 (ERHY), lysine 98, 114-115 (RR), and 180-181 (GN). The active-site Tele-phosphohistidine intermediate is the histidine 9. The Proton donor/acceptor role is filled by glutamate 87.

It belongs to the phosphoglycerate mutase family. BPG-dependent PGAM subfamily. Homodimer.

The catalysed reaction is (2R)-2-phosphoglycerate = (2R)-3-phosphoglycerate. The protein operates within carbohydrate degradation; glycolysis; pyruvate from D-glyceraldehyde 3-phosphate: step 3/5. Catalyzes the interconversion of 2-phosphoglycerate and 3-phosphoglycerate. This chain is 2,3-bisphosphoglycerate-dependent phosphoglycerate mutase, found in Zymomonas mobilis subsp. mobilis (strain ATCC 31821 / ZM4 / CP4).